The following is a 252-amino-acid chain: uncharacterized protein (252 aa).

The chain crosses the membrane as a helical span at residues 80–100 (LSVLVIGSTMFTHAGVLPVLA).

It is found in the host membrane. The protein localises to the virion. This is an uncharacterized protein from Acanthamoeba polyphaga mimivirus (APMV).